We begin with the raw amino-acid sequence, 68 residues long: Gallinacin-10 (68 aa).

A signal peptide spans methionine 1–proline 19. The propeptide occupies glycine 20–leucine 25. Disulfide bonds link cysteine 32–cysteine 61, cysteine 39–cysteine 54, and cysteine 44–cysteine 62.

Belongs to the beta-defensin family. In terms of tissue distribution, strong expression in the testis, liver, gall bladder and kidney. Also expressed in the ovary and male and female reproductive tracts. Expressed in the ovarian stroma and the theca and granulosa layers of the ovarian follicle.

The protein resides in the secreted. The protein localises to the cytoplasmic granule. In terms of biological role, has bactericidal activity. This chain is Gallinacin-10 (GAL10), found in Gallus gallus (Chicken).